A 467-amino-acid chain; its full sequence is MDTAGIRLTPKEIVSKLNEYIVGQNDAKRKVAIALRNRYRRSLLDEESKQEISPKNILMIGPTGVGKTEIARRMAKVVGAPFIKVEATKFTEVGYVGRDVESMVRDLVDVSVRLVKAQKKSLVQDEATAKANEKLVKLLVPSMKKKASQTNNPLESLFGGAIPNFGQNNEDEEEPPTEEIKTKRSEIKRQLEEGKLEKEKVRIKVEQDPGALGMLGTNQNQQMQEMMNQLMPKKKVEREVAVETARKILADSYADELIDQESANQEALELAEQMGIIFIDEIDKVATNNHNSGQDVSRQGVQRDILPILEGSVIQTKYGTVNTEHMLFIGAGAFHVSKPSDLIPELQGRFPIRVELDSLSVEDFVRILTEPKLSLIKQYEALLQTEEVTVNFTDEAITRLAEIAYQVNQDTDNIGARRLHTILEKMLEDLSFEAPSMPNAVVDITPQYVDDKLKSISTNKDLSAFIL.

ATP contacts are provided by residues V22 and 64–69 (GVGKTE). The disordered stretch occupies residues 149–192 (QTNNPLESLFGGAIPNFGQNNEDEEEPPTEEIKTKRSEIKRQLE). A compositionally biased stretch (basic and acidic residues) spans 178–192 (EEIKTKRSEIKRQLE). The ATP site is built by D280, E345, and R417.

It belongs to the ClpX chaperone family. HslU subfamily. In terms of assembly, a double ring-shaped homohexamer of HslV is capped on each side by a ring-shaped HslU homohexamer. The assembly of the HslU/HslV complex is dependent on binding of ATP.

It localises to the cytoplasm. In terms of biological role, ATPase subunit of a proteasome-like degradation complex; this subunit has chaperone activity. The binding of ATP and its subsequent hydrolysis by HslU are essential for unfolding of protein substrates subsequently hydrolyzed by HslV. HslU recognizes the N-terminal part of its protein substrates and unfolds these before they are guided to HslV for hydrolysis. This is ATP-dependent protease ATPase subunit HslU from Staphylococcus aureus (strain MW2).